Here is a 159-residue protein sequence, read N- to C-terminus: MFLRQEDFATVVRSTPLVSLDFIVENSRGEFLLGKRTNRPAQGYWFVPGGRVQKDETLEAAFERLTMAELGLRLPITAGQFYGVWQHFYDDNFSGTDFTTHYVVLGFRFRVSEEELLLPDEQHDDYRWLTSDALLASDNVHANSRAYFLAEKRTGVPGL.

Substrate-binding positions include 2 to 3, F8, and R36; that span reads FL. Residues 13-153 form the Nudix hydrolase domain; that stretch reads RSTPLVSLDF…SRAYFLAEKR (141 aa). Positions 49, 69, and 122 each coordinate Mg(2+). The short motif at 50-71 is the Nudix box element; it reads GRVQKDETLEAAFERLTMAELG.

In terms of assembly, homodimer. It depends on Mg(2+) as a cofactor.

The enzyme catalyses GDP-alpha-D-mannose + H2O = D-mannose + GDP + H(+). Its function is as follows. Hydrolyzes both GDP-mannose and GDP-glucose. Could participate in the regulation of cell wall biosynthesis by influencing the concentration of GDP-mannose or GDP-glucose in the cell. Might also be involved in the biosynthesis of the slime polysaccharide colanic acid. This is GDP-mannose mannosyl hydrolase from Escherichia coli (strain K12).